The sequence spans 185 residues: Hypoxanthine/guanine phosphoribosyltransferase (185 aa).

It belongs to the purine/pyrimidine phosphoribosyltransferase family. Archaeal HPRT subfamily. As to quaternary structure, homodimer.

Its subcellular location is the cytoplasm. It catalyses the reaction IMP + diphosphate = hypoxanthine + 5-phospho-alpha-D-ribose 1-diphosphate. It carries out the reaction GMP + diphosphate = guanine + 5-phospho-alpha-D-ribose 1-diphosphate. It participates in purine metabolism; IMP biosynthesis via salvage pathway; IMP from hypoxanthine: step 1/1. Functionally, catalyzes a salvage reaction resulting in the formation of IMP that is energically less costly than de novo synthesis. The chain is Hypoxanthine/guanine phosphoribosyltransferase from Methanococcus maripaludis (strain C5 / ATCC BAA-1333).